The primary structure comprises 364 residues: Probable endopolygalacturonase B (364 aa).

A signal peptide spans 1 to 20 (MHFFQSSLVAATMGAALVAA). The propeptide occupies 21 to 29 (APAADLETR). Residues Cys32 and Cys47 are joined by a disulfide bond. N-linked (GlcNAc...) asparagine glycans are attached at residues Asn138 and Asn141. PbH1 repeat units lie at residues 159–188 (SDHL…DVGS), 189–210 (STYI…AVNS), 211–231 (GEHI…SIGS), 240–261 (VNDV…RIKT), 269–291 (VTGV…VVQQ), and 303–324 (TNGV…TSSA). The Proton donor role is filled by Asp203. An intrachain disulfide couples Cys205 to Cys221. His225 is an active-site residue. A disulfide bridge connects residues Cys331 and Cys336. The N-linked (GlcNAc...) asparagine glycan is linked to Asn338. The cysteines at positions 355 and 364 are disulfide-linked.

It belongs to the glycosyl hydrolase 28 family.

It localises to the secreted. The enzyme catalyses (1,4-alpha-D-galacturonosyl)n+m + H2O = (1,4-alpha-D-galacturonosyl)n + (1,4-alpha-D-galacturonosyl)m.. In terms of biological role, involved in maceration and soft-rotting of plant tissue. Hydrolyzes the 1,4-alpha glycosidic bonds of de-esterified pectate in the smooth region of the plant cell wall. The protein is Probable endopolygalacturonase B (pgaB) of Aspergillus fumigatus (strain CBS 144.89 / FGSC A1163 / CEA10) (Neosartorya fumigata).